The sequence spans 111 residues: Phosphoribosyl-ATP pyrophosphatase (111 aa).

This sequence belongs to the PRA-PH family.

The protein localises to the cytoplasm. It catalyses the reaction 1-(5-phospho-beta-D-ribosyl)-ATP + H2O = 1-(5-phospho-beta-D-ribosyl)-5'-AMP + diphosphate + H(+). It functions in the pathway amino-acid biosynthesis; L-histidine biosynthesis; L-histidine from 5-phospho-alpha-D-ribose 1-diphosphate: step 2/9. The chain is Phosphoribosyl-ATP pyrophosphatase from Pseudomonas putida (strain W619).